The sequence spans 147 residues: Ubiquitin-conjugating enzyme E2 D2B (147 aa).

The UBC core domain maps to 1 to 147 (MALKRIHKEL…AREWTQKYAM (147 aa)). Cysteine 85 (glycyl thioester intermediate) is an active-site residue.

The protein belongs to the ubiquitin-conjugating enzyme family. Interacts with CNOT4 (via RING domain). In terms of tissue distribution, testis-specific. Mainly expressed in the round spermatids (at protein level).

The enzyme catalyses S-ubiquitinyl-[E1 ubiquitin-activating enzyme]-L-cysteine + [E2 ubiquitin-conjugating enzyme]-L-cysteine = [E1 ubiquitin-activating enzyme]-L-cysteine + S-ubiquitinyl-[E2 ubiquitin-conjugating enzyme]-L-cysteine.. It participates in protein modification; protein ubiquitination. Catalyzes the covalent attachment of ubiquitin to other proteins. Mediates the selective degradation of short-lived and abnormal proteins. Functions in the E6/E6-AP-induced ubiquitination of p53/TP53. Mediates ubiquitination of PEX5 and SQSTM1 and autoubiquitination of STUB1 and TRAF6. Involved in the signal-induced conjugation and subsequent degradation of NFKBIA, FBXW2-mediated GCM1 ubiquitination and degradation, MDM2-dependent degradation of p53/TP53 and the activation of MAVS in the mitochondria by RIGI in response to viral infection Plays a role in early maturation of the testis. The sequence is that of Ubiquitin-conjugating enzyme E2 D2B (Ube2d2b) from Rattus norvegicus (Rat).